A 665-amino-acid polypeptide reads, in one-letter code: Target of rapamycin complex 2 subunit sin1 (665 aa).

S62 bears the Phosphoserine mark. 2 stretches are compositionally biased toward polar residues: residues 65–83 and 100–109; these read IVANDTVSNVRKPSDTKQV and YATSDLSESS. The tract at residues 65 to 112 is disordered; that stretch reads IVANDTVSNVRKPSDTKQVNGAGGQVNHSRAEDSDYATSDLSESSDVG. S133 bears the Phosphoserine mark. One can recognise a CRIM domain in the interval 255–392; sequence TSALRALLEH…ATPAQIKENQ (138 aa). Residues 395–433 are disordered; it reads YPFKSKHPTSIPEANNKTHIRHTSSTSSQSQKQAQDVKD. Phosphoserine occurs at positions 404, 490, 502, and 530. The disordered stretch occupies residues 517-537; the sequence is RDKKGSTQQLPTSSPQNSVYG. Polar residues predominate over residues 522–536; that stretch reads STQQLPTSSPQNSVY. Residues 558-659 enclose the SIN1-type PH domain; the sequence is TYQEFLVWKR…IVSRIRALMN (102 aa).

Belongs to the SIN1 family. In terms of assembly, the target of rapamycin complex 2 (TORC2) is composed of at least bit61, pop3/wat1, sin1, ste20 and tor1. Interacts with the sty1 MAP kinase. In terms of processing, phosphorylated; under environmental stress. Either Ser-61 or Ser-62 and Ser-298, Ser-299 or Ser-301 are phosphorylated as well.

Functionally, component of the mechanistic target of rapamycin complex 2 (mTORC2), which regulates multiple cellular processes to control cell growth in response to environmental signals. In response to signals, TORC2 phosphorylates AGC protein kinase family members, such as gad8. TORC2 is required for cell survival under various stress conditions. TORC2 positively controls G1 cell-cycle arrest, sexual development and amino acid uptake. Positively regulates amino acid uptake through the control of expression of amino acid permeases. Within the mTORC2 complex, sin1 acts as a substrate adapter which recognizes and binds AGC protein kinase family members for phosphorylation by tor1. This is Target of rapamycin complex 2 subunit sin1 from Schizosaccharomyces pombe (strain 972 / ATCC 24843) (Fission yeast).